We begin with the raw amino-acid sequence, 39 residues long: Cytochrome b559 subunit beta (39 aa).

The chain crosses the membrane as a helical span at residues 14–30 (WLAIHGLAVPTVSFLGS). Heme is bound at residue His18.

It belongs to the PsbE/PsbF family. In terms of assembly, heterodimer of an alpha subunit and a beta subunit. PSII is composed of 1 copy each of membrane proteins PsbA, PsbB, PsbC, PsbD, PsbE, PsbF, PsbH, PsbI, PsbJ, PsbK, PsbL, PsbM, PsbT, PsbX, PsbY, PsbZ, Psb30/Ycf12, at least 3 peripheral proteins of the oxygen-evolving complex and a large number of cofactors. It forms dimeric complexes. It depends on heme b as a cofactor.

The protein localises to the plastid. The protein resides in the chloroplast thylakoid membrane. In terms of biological role, this b-type cytochrome is tightly associated with the reaction center of photosystem II (PSII). PSII is a light-driven water:plastoquinone oxidoreductase that uses light energy to abstract electrons from H(2)O, generating O(2) and a proton gradient subsequently used for ATP formation. It consists of a core antenna complex that captures photons, and an electron transfer chain that converts photonic excitation into a charge separation. This Allium textile (Textile onion) protein is Cytochrome b559 subunit beta.